A 400-amino-acid chain; its full sequence is NADPH dehydrogenase 3 (400 aa).

Residues threonine 38 and glutamine 115 each coordinate FMN. Substrate-binding residues include histidine 192 and asparagine 195. The active-site Proton donor is the tyrosine 197. Positions 244 and 349 each coordinate FMN. Tyrosine 376 lines the substrate pocket.

In terms of assembly, homodimer or heterodimer with OYE2. FMN serves as cofactor.

The enzyme catalyses A + NADPH + H(+) = AH2 + NADP(+). Flavin-dependent enoate reductase that catalyzes the chemo- and stereoslective hydrogenation of electron-poor alkenes. The enzyme is reduced by NADPH, and oxygen, quinones, and alpha,beta-unsaturated aldehydes and ketones can act as electron acceptors to complete catalytic turnover. The physiological oxidant remains elusive. Has a prooxidant activity, increasing reactive oxygen species (ROS) levels when overexpressed. Formation of OYE2-OYE3 heterodimers contribute to the induction of programmed cell death upon oxidative stress. The protein is NADPH dehydrogenase 3 of Saccharomyces cerevisiae (strain ATCC 204508 / S288c) (Baker's yeast).